The sequence spans 527 residues: Amine oxidase [flavin-containing] A (527 aa).

Residue methionine 1 is modified to N-acetylmethionine. Residues 1 to 497 lie on the Cytoplasmic side of the membrane; that stretch reads MERQEKANNA…RTFWERNLPS (497 aa). A Phosphoserine modification is found at serine 383. An S-8alpha-FAD cysteine modification is found at cysteine 406. The chain crosses the membrane as a helical; Anchor for type IV membrane protein span at residues 498 to 518; sequence VTGLLKIIGFSTSVTALWLAV. At 519 to 527 the chain is on the mitochondrial intermembrane side; it reads YKFRLLTRS. The segment at 520–522 is interaction with membrane phospholipid headgroups; that stretch reads KFR.

It belongs to the flavin monoamine oxidase family. In terms of assembly, monomer, homo- or heterodimer (containing two subunits of similar size). Each subunit contains a covalently bound flavin. Enzymatically active as monomer. Requires FAD as cofactor.

The protein resides in the mitochondrion outer membrane. It carries out the reaction a secondary aliphatic amine + O2 + H2O = a primary amine + an aldehyde + H2O2. The enzyme catalyses a primary methyl amine + O2 + H2O = an aldehyde + H2O2 + NH4(+). The catalysed reaction is (R)-adrenaline + O2 + H2O = (R)-3,4-dihydroxymandelaldehyde + methylamine + H2O2. It catalyses the reaction dopamine + O2 + H2O = 3,4-dihydroxyphenylacetaldehyde + H2O2 + NH4(+). It carries out the reaction tyramine + O2 + H2O = (4-hydroxyphenyl)acetaldehyde + H2O2 + NH4(+). The enzyme catalyses (R)-noradrenaline + O2 + H2O = (R)-3,4-dihydroxymandelaldehyde + H2O2 + NH4(+). The catalysed reaction is serotonin + O2 + H2O = (5-hydroxyindol-3-yl)acetaldehyde + H2O2 + NH4(+). It catalyses the reaction kynuramine + O2 + H2O = 3-(2-aminophenyl)-3-oxopropanal + H2O2 + NH4(+). It carries out the reaction tryptamine + O2 + H2O = indole-3-acetaldehyde + H2O2 + NH4(+). The enzyme catalyses 2-phenylethylamine + O2 + H2O = 2-phenylacetaldehyde + H2O2 + NH4(+). Catalyzes the oxidative deamination of primary and some secondary amine such as neurotransmitters, with concomitant reduction of oxygen to hydrogen peroxide and has important functions in the metabolism of neuroactive and vasoactive amines in the central nervous system and peripheral tissues. Preferentially oxidizes serotonin. Also catalyzes the oxidative deamination of kynuramine to 3-(2-aminophenyl)-3-oxopropanal that can spontaneously condense to 4-hydroxyquinoline. This is Amine oxidase [flavin-containing] A from Sus scrofa (Pig).